The sequence spans 75 residues: UPF0270 protein PP_1747 (75 aa).

Belongs to the UPF0270 family.

This Pseudomonas putida (strain ATCC 47054 / DSM 6125 / CFBP 8728 / NCIMB 11950 / KT2440) protein is UPF0270 protein PP_1747.